We begin with the raw amino-acid sequence, 1273 residues long: DNA-directed RNA polymerase subunit beta (1273 aa).

Residues 1252–1273 form a disordered region; that stretch reads ADDQDLVVSSNDEEVSENDERS.

This sequence belongs to the RNA polymerase beta chain family. The RNAP catalytic core consists of 2 alpha, 1 beta, 1 beta' and 1 omega subunit. When a sigma factor is associated with the core the holoenzyme is formed, which can initiate transcription.

It carries out the reaction RNA(n) + a ribonucleoside 5'-triphosphate = RNA(n+1) + diphosphate. DNA-dependent RNA polymerase catalyzes the transcription of DNA into RNA using the four ribonucleoside triphosphates as substrates. The polypeptide is DNA-directed RNA polymerase subunit beta (Dehalococcoides mccartyi (strain ATCC BAA-2100 / JCM 16839 / KCTC 5957 / BAV1)).